Consider the following 138-residue polypeptide: MMAEPWQALQLLLAILLTLMALPYQARKKTFLSVHEVMAVENYAKDSLQWITDQYNKESDDKYHFRIFRVLKVQRQVTDHLEYHLNVEMQWTTCQKPETTNCVPQERELHKQVNCFFSVFAVPWFEQYKILNKSCSSD.

Residues 1-26 form the signal peptide; that stretch reads MMAEPWQALQLLLAILLTLMALPYQA. Intrachain disulfides connect C94–C102 and C115–C135. The N-linked (GlcNAc...) asparagine glycan is linked to N132.

It belongs to the cystatin family. As to expression, detected in the epithelium and lumen of the epididymis, and in sperm (at protein level).

It localises to the secreted. In terms of biological role, has antibacterial activity against the Gram-negative bacteria E.coli. May play a role in sperm maturation and fertilization. This is Cystatin-11 (CST11) from Homo sapiens (Human).